The chain runs to 888 residues: Alanine--tRNA ligase (888 aa).

Residues His564, His568, Cys676, and His680 each coordinate Zn(2+).

It belongs to the class-II aminoacyl-tRNA synthetase family. It depends on Zn(2+) as a cofactor.

It is found in the cytoplasm. The catalysed reaction is tRNA(Ala) + L-alanine + ATP = L-alanyl-tRNA(Ala) + AMP + diphosphate. Catalyzes the attachment of alanine to tRNA(Ala) in a two-step reaction: alanine is first activated by ATP to form Ala-AMP and then transferred to the acceptor end of tRNA(Ala). Also edits incorrectly charged Ser-tRNA(Ala) and Gly-tRNA(Ala) via its editing domain. The polypeptide is Alanine--tRNA ligase (Bartonella tribocorum (strain CIP 105476 / IBS 506)).